The primary structure comprises 301 residues: LHMIHLHWYQYPPMNPMMYPLLLIFMLFTGILCLAGNFVTIWVFMNTKSLRTPANLLVVNLAMSDFLMMFTMFPPMMVTCYYHTWTLGPTFCQVYAFLGNLCGCASIWTMVFITFDRYNVIVKGVAGEPLSNKKAAMWILSVWVLSTAWCMAPFFGWNSYVPEGNLTGCGTDYLSEDILSRSYLYIYSTWVYFLPLTITIYCYVFIIKAVAAHEKGMRDQAKKMGIKSLRNEEAQKTSAECRLAKIAMTTVALWFIAWTPYLLINWVGMFARSYLSPVYTIWGYVFAKANAVYNPIVYAIS.

The Extracellular portion of the chain corresponds to 1–18 (LHMIHLHWYQYPPMNPMM). Residues 19 to 43 (YPLLLIFMLFTGILCLAGNFVTIWV) form a helical membrane-spanning segment. The Cytoplasmic segment spans residues 44–55 (FMNTKSLRTPAN). The chain crosses the membrane as a helical span at residues 56–78 (LLVVNLAMSDFLMMFTMFPPMMV). The Extracellular segment spans residues 79 to 92 (TCYYHTWTLGPTFC). Residues cysteine 92 and cysteine 169 are joined by a disulfide bond. A helical membrane pass occupies residues 93 to 115 (QVYAFLGNLCGCASIWTMVFITF). Positions 116–118 (DRY) match the 'Ionic lock' involved in activated form stabilization motif. Residues 116–134 (DRYNVIVKGVAGEPLSNKK) lie on the Cytoplasmic side of the membrane. A helical transmembrane segment spans residues 135-155 (AAMWILSVWVLSTAWCMAPFF). Over 156–182 (GWNSYVPEGNLTGCGTDYLSEDILSRS) the chain is Extracellular. A glycan (N-linked (GlcNAc...) asparagine) is linked at asparagine 165. Residues 183–204 (YLYIYSTWVYFLPLTITIYCYV) form a helical membrane-spanning segment. Over 205–245 (FIIKAVAAHEKGMRDQAKKMGIKSLRNEEAQKTSAECRLAK) the chain is Cytoplasmic. A helical transmembrane segment spans residues 246 to 267 (IAMTTVALWFIAWTPYLLINWV). Residues 268–278 (GMFARSYLSPV) lie on the Extracellular side of the membrane. The chain crosses the membrane as a helical span at residues 279 to 300 (YTIWGYVFAKANAVYNPIVYAI). Lysine 288 carries the N6-(retinylidene)lysine modification.

It belongs to the G-protein coupled receptor 1 family. Opsin subfamily. As to quaternary structure, homodimer. Interacts with GNAQ. Post-translationally, contains one covalently linked retinal chromophore.

It is found in the cell projection. The protein resides in the rhabdomere membrane. Functionally, photoreceptor required for image-forming vision at low light intensity. Can use both retinal and 3-dehydroretinal as visual pigment. Light-induced isomerization of 11-cis to all-trans retinal triggers a conformational change that activates signaling via G-proteins. Signaling via GNAQ probably mediates the activation of phospholipase C. The protein is Rhodopsin (RHO) of Faxonius virilis (Virile crayfish).